The sequence spans 89 residues: Sodium channel toxin To13 (89 aa).

A signal peptide spans 1-18 (MKTLFLIITSFILLEVEG). The LCN-type CS-alpha/beta domain maps to 20-87 (KNGYPRDSKG…TWKNKEPKCK (68 aa)). Disulfide bonds link cysteine 30–cysteine 86, cysteine 34–cysteine 60, cysteine 45–cysteine 67, and cysteine 49–cysteine 69.

This sequence belongs to the long (4 C-C) scorpion toxin superfamily. Sodium channel inhibitor family. As to expression, expressed by the venom gland.

Its subcellular location is the secreted. Its function is as follows. Inhibits voltage-gated sodium channels (Nav). In Tityus obscurus (Amazonian scorpion), this protein is Sodium channel toxin To13.